A 413-amino-acid polypeptide reads, in one-letter code: Serine hydroxymethyltransferase (413 aa).

(6S)-5,6,7,8-tetrahydrofolate contacts are provided by residues leucine 118 and 122-124 (GHL). Position 228 is an N6-(pyridoxal phosphate)lysine (lysine 228).

The protein belongs to the SHMT family. As to quaternary structure, homodimer. The cofactor is pyridoxal 5'-phosphate.

The protein resides in the cytoplasm. The enzyme catalyses (6R)-5,10-methylene-5,6,7,8-tetrahydrofolate + glycine + H2O = (6S)-5,6,7,8-tetrahydrofolate + L-serine. The protein operates within one-carbon metabolism; tetrahydrofolate interconversion. It functions in the pathway amino-acid biosynthesis; glycine biosynthesis; glycine from L-serine: step 1/1. Functionally, catalyzes the reversible interconversion of serine and glycine with tetrahydrofolate (THF) serving as the one-carbon carrier. This reaction serves as the major source of one-carbon groups required for the biosynthesis of purines, thymidylate, methionine, and other important biomolecules. Also exhibits THF-independent aldolase activity toward beta-hydroxyamino acids, producing glycine and aldehydes, via a retro-aldol mechanism. This Phytoplasma australiense protein is Serine hydroxymethyltransferase.